Consider the following 384-residue polypeptide: Dual-specificity RNA methyltransferase RlmN (384 aa).

E105 serves as the catalytic Proton acceptor. The Radical SAM core domain occupies 111 to 350 (EDDRATLCVS…TIVRKTRGDD (240 aa)). C118 and C355 form a disulfide bridge. [4Fe-4S] cluster-binding residues include C125, C129, and C132. Residues 179–180 (GE), S211, 233–235 (SLH), and N312 each bind S-adenosyl-L-methionine. Catalysis depends on C355, which acts as the S-methylcysteine intermediate.

The protein belongs to the radical SAM superfamily. RlmN family. [4Fe-4S] cluster is required as a cofactor.

It localises to the cytoplasm. The catalysed reaction is adenosine(2503) in 23S rRNA + 2 reduced [2Fe-2S]-[ferredoxin] + 2 S-adenosyl-L-methionine = 2-methyladenosine(2503) in 23S rRNA + 5'-deoxyadenosine + L-methionine + 2 oxidized [2Fe-2S]-[ferredoxin] + S-adenosyl-L-homocysteine. It carries out the reaction adenosine(37) in tRNA + 2 reduced [2Fe-2S]-[ferredoxin] + 2 S-adenosyl-L-methionine = 2-methyladenosine(37) in tRNA + 5'-deoxyadenosine + L-methionine + 2 oxidized [2Fe-2S]-[ferredoxin] + S-adenosyl-L-homocysteine. Functionally, specifically methylates position 2 of adenine 2503 in 23S rRNA and position 2 of adenine 37 in tRNAs. m2A2503 modification seems to play a crucial role in the proofreading step occurring at the peptidyl transferase center and thus would serve to optimize ribosomal fidelity. This is Dual-specificity RNA methyltransferase RlmN from Escherichia coli O17:K52:H18 (strain UMN026 / ExPEC).